The following is a 1714-amino-acid chain: uncharacterized protein (1714 aa).

Disordered stretches follow at residues 47–70 and 584–616; these read SVAGSEKNASDDDSDASSVMSDDL and KKTGKGGWSGQKQQKPGAGGKKGATKESGKSKK. Residues 607 to 614 and 806 to 813 contribute to the ATP site; these read ATKESGKS and APTSAGKT. The span at 607 to 616 shows a compositional bias: basic and acidic residues; it reads ATKESGKSKK. A Helicase ATP-binding domain is found at 793–963; sequence LDSVDRGNSA…WLNSSEQAKS (171 aa). The DEVH box signature appears at 913-916; it reads DEVH. Residues 1197–1223 form a disordered region; sequence KRKRDDAEKKKKGDKDEDAGPEKDDDE. Residues 1199-1218 show a composition bias toward basic and acidic residues; sequence KRDDAEKKKKGDKDEDAGPE. The region spanning 1237 to 1391 is the Helicase C-terminal domain; the sequence is ALERFKLRGR…NPPFTVLFLL (155 aa).

It belongs to the helicase family. SKI2 subfamily.

It is found in the nucleus. This is an uncharacterized protein from Caenorhabditis elegans.